We begin with the raw amino-acid sequence, 212 residues long: Peptide methionine sulfoxide reductase MsrA (212 aa).

Residues 1–14 (MSSIDKTQRITQSD) are compositionally biased toward polar residues. Residues 1-21 (MSSIDKTQRITQSDALPGRST) are disordered. Cys52 is a catalytic residue.

It belongs to the MsrA Met sulfoxide reductase family.

It catalyses the reaction L-methionyl-[protein] + [thioredoxin]-disulfide + H2O = L-methionyl-(S)-S-oxide-[protein] + [thioredoxin]-dithiol. The enzyme catalyses [thioredoxin]-disulfide + L-methionine + H2O = L-methionine (S)-S-oxide + [thioredoxin]-dithiol. Has an important function as a repair enzyme for proteins that have been inactivated by oxidation. Catalyzes the reversible oxidation-reduction of methionine sulfoxide in proteins to methionine. This Pectobacterium carotovorum subsp. carotovorum (strain PC1) protein is Peptide methionine sulfoxide reductase MsrA.